Reading from the N-terminus, the 156-residue chain is SsrA-binding protein (156 aa).

The protein belongs to the SmpB family.

The protein resides in the cytoplasm. Functionally, required for rescue of stalled ribosomes mediated by trans-translation. Binds to transfer-messenger RNA (tmRNA), required for stable association of tmRNA with ribosomes. tmRNA and SmpB together mimic tRNA shape, replacing the anticodon stem-loop with SmpB. tmRNA is encoded by the ssrA gene; the 2 termini fold to resemble tRNA(Ala) and it encodes a 'tag peptide', a short internal open reading frame. During trans-translation Ala-aminoacylated tmRNA acts like a tRNA, entering the A-site of stalled ribosomes, displacing the stalled mRNA. The ribosome then switches to translate the ORF on the tmRNA; the nascent peptide is terminated with the 'tag peptide' encoded by the tmRNA and targeted for degradation. The ribosome is freed to recommence translation, which seems to be the essential function of trans-translation. The chain is SsrA-binding protein from Shouchella clausii (strain KSM-K16) (Alkalihalobacillus clausii).